A 361-amino-acid chain; its full sequence is GDSL esterase/lipase At2g40250 (361 aa).

A signal peptide spans 1–28; it reads MNRNQHKPMFVTFLINILLLQLLNLTNA. The Nucleophile role is filled by Ser-43. Active-site residues include Asp-337 and His-340.

The protein belongs to the 'GDSL' lipolytic enzyme family.

It is found in the secreted. The chain is GDSL esterase/lipase At2g40250 from Arabidopsis thaliana (Mouse-ear cress).